A 190-amino-acid chain; its full sequence is Large ribosomal subunit protein uL6 (190 aa).

This sequence belongs to the universal ribosomal protein uL6 family.

This Spodoptera frugiperda (Fall armyworm) protein is Large ribosomal subunit protein uL6 (RpL9).